Consider the following 156-residue polypeptide: ATP synthase subunit b (156 aa).

The chain crosses the membrane as a helical span at residues 11–31 (AIAFAVFVWFCMKYVWPPLLA).

The protein belongs to the ATPase B chain family. As to quaternary structure, F-type ATPases have 2 components, F(1) - the catalytic core - and F(0) - the membrane proton channel. F(1) has five subunits: alpha(3), beta(3), gamma(1), delta(1), epsilon(1). F(0) has three main subunits: a(1), b(2) and c(10-14). The alpha and beta chains form an alternating ring which encloses part of the gamma chain. F(1) is attached to F(0) by a central stalk formed by the gamma and epsilon chains, while a peripheral stalk is formed by the delta and b chains.

The protein resides in the cell inner membrane. In terms of biological role, f(1)F(0) ATP synthase produces ATP from ADP in the presence of a proton or sodium gradient. F-type ATPases consist of two structural domains, F(1) containing the extramembraneous catalytic core and F(0) containing the membrane proton channel, linked together by a central stalk and a peripheral stalk. During catalysis, ATP synthesis in the catalytic domain of F(1) is coupled via a rotary mechanism of the central stalk subunits to proton translocation. Component of the F(0) channel, it forms part of the peripheral stalk, linking F(1) to F(0). This chain is ATP synthase subunit b, found in Psychromonas ingrahamii (strain DSM 17664 / CCUG 51855 / 37).